The sequence spans 268 residues: MERYESLFAQLKERKEGAFVPFVTLGDPGIEQSLKIIDTLIEAGADALELGIPFSDPLADGPTIQNATLRAFAAGVTPAQCFEMLALIRQKHPTIPIGLLMYANLVFNKGIDEFYAQCEKVGVDSVLVADVPVEESAPFRQAALRHNVAPIFICPPNADDDLLRQIASYGRGYTYLLSRAGVTGAENRAALPLNHLVAKLKEYNAAPPLQGFGISAPDQVKAAIDAGAAGAISGSAIVKIIEQHINEPEKMLAALKVFVQPMKAATSS.

Catalysis depends on proton acceptor residues Glu-49 and Asp-60.

This sequence belongs to the TrpA family. Tetramer of two alpha and two beta chains.

The enzyme catalyses (1S,2R)-1-C-(indol-3-yl)glycerol 3-phosphate + L-serine = D-glyceraldehyde 3-phosphate + L-tryptophan + H2O. It participates in amino-acid biosynthesis; L-tryptophan biosynthesis; L-tryptophan from chorismate: step 5/5. Functionally, the alpha subunit is responsible for the aldol cleavage of indoleglycerol phosphate to indole and glyceraldehyde 3-phosphate. In Shigella boydii serotype 18 (strain CDC 3083-94 / BS512), this protein is Tryptophan synthase alpha chain.